The primary structure comprises 170 residues: ATP synthase subunit b (170 aa).

A helical membrane pass occupies residues 30 to 50; it reads FFFVLAIFLVVLGVIGTFVVP.

It belongs to the ATPase B chain family. In terms of assembly, F-type ATPases have 2 components, F(1) - the catalytic core - and F(0) - the membrane proton channel. F(1) has five subunits: alpha(3), beta(3), gamma(1), delta(1), epsilon(1). F(0) has three main subunits: a(1), b(2) and c(10-14). The alpha and beta chains form an alternating ring which encloses part of the gamma chain. F(1) is attached to F(0) by a central stalk formed by the gamma and epsilon chains, while a peripheral stalk is formed by the delta and b chains.

The protein localises to the cell membrane. Functionally, f(1)F(0) ATP synthase produces ATP from ADP in the presence of a proton or sodium gradient. F-type ATPases consist of two structural domains, F(1) containing the extramembraneous catalytic core and F(0) containing the membrane proton channel, linked together by a central stalk and a peripheral stalk. During catalysis, ATP synthesis in the catalytic domain of F(1) is coupled via a rotary mechanism of the central stalk subunits to proton translocation. Component of the F(0) channel, it forms part of the peripheral stalk, linking F(1) to F(0). This chain is ATP synthase subunit b, found in Mycobacterium leprae (strain TN).